The primary structure comprises 194 residues: Holliday junction branch migration complex subunit RuvA (194 aa).

The tract at residues 1–63 (MFEYLYGTVE…EDTYKLIGFL (63 aa)) is domain I. The tract at residues 64–142 (DERDRKIFEL…NLTYTEEETV (79 aa)) is domain II. The flexible linker stretch occupies residues 143 to 147 (SMDML). The segment at 147-194 (LEDLVLALEGLGYNKKEIDKTLEKIDLNKFSSLEDAIKGILKNMRIGD) is domain III.

It belongs to the RuvA family. As to quaternary structure, homotetramer. Forms an RuvA(8)-RuvB(12)-Holliday junction (HJ) complex. HJ DNA is sandwiched between 2 RuvA tetramers; dsDNA enters through RuvA and exits via RuvB. An RuvB hexamer assembles on each DNA strand where it exits the tetramer. Each RuvB hexamer is contacted by two RuvA subunits (via domain III) on 2 adjacent RuvB subunits; this complex drives branch migration. In the full resolvosome a probable DNA-RuvA(4)-RuvB(12)-RuvC(2) complex forms which resolves the HJ.

It localises to the cytoplasm. Functionally, the RuvA-RuvB-RuvC complex processes Holliday junction (HJ) DNA during genetic recombination and DNA repair, while the RuvA-RuvB complex plays an important role in the rescue of blocked DNA replication forks via replication fork reversal (RFR). RuvA specifically binds to HJ cruciform DNA, conferring on it an open structure. The RuvB hexamer acts as an ATP-dependent pump, pulling dsDNA into and through the RuvAB complex. HJ branch migration allows RuvC to scan DNA until it finds its consensus sequence, where it cleaves and resolves the cruciform DNA. This Fusobacterium nucleatum subsp. nucleatum (strain ATCC 25586 / DSM 15643 / BCRC 10681 / CIP 101130 / JCM 8532 / KCTC 2640 / LMG 13131 / VPI 4355) protein is Holliday junction branch migration complex subunit RuvA.